Reading from the N-terminus, the 72-residue chain is DNA-directed RNA polymerase subunit omega (72 aa).

Belongs to the RNA polymerase subunit omega family. As to quaternary structure, the RNAP catalytic core consists of 2 alpha, 1 beta, 1 beta' and 1 omega subunit. When a sigma factor is associated with the core the holoenzyme is formed, which can initiate transcription.

It catalyses the reaction RNA(n) + a ribonucleoside 5'-triphosphate = RNA(n+1) + diphosphate. In terms of biological role, promotes RNA polymerase assembly. Latches the N- and C-terminal regions of the beta' subunit thereby facilitating its interaction with the beta and alpha subunits. This chain is DNA-directed RNA polymerase subunit omega, found in Francisella tularensis subsp. holarctica (strain LVS).